Reading from the N-terminus, the 479-residue chain is Oxysterol-binding protein homolog C23B6.01c (479 aa).

Phosphoserine is present on residues Ser-328, Ser-408, Ser-409, and Ser-421. A compositionally biased stretch (basic and acidic residues) spans 404–418; that stretch reads KPEDSSIHKHSRDAS. Residues 404–479 are disordered; sequence KPEDSSIHKH…KLHEEQDPAL (76 aa). Residues 439–452 are compositionally biased toward polar residues; that stretch reads QSTASFVTYRSDNG. Positions 470–479 are enriched in basic and acidic residues; sequence KLHEEQDPAL.

This sequence belongs to the OSBP family.

The protein resides in the cytoplasm. It localises to the nucleus. The chain is Oxysterol-binding protein homolog C23B6.01c from Schizosaccharomyces pombe (strain 972 / ATCC 24843) (Fission yeast).